The sequence spans 176 residues: Ribosome rescue factor SmrB (176 aa).

The region spanning 98 to 173 (LDLHGLTQKQ…GTAALLLLIE (76 aa)) is the Smr domain.

Belongs to the SmrB family. As to quaternary structure, associates with collided ribosomes, but not with correctly translating polysomes.

Functionally, acts as a ribosome collision sensor. Detects stalled/collided disomes (pairs of ribosomes where the leading ribosome is stalled and a second ribosome has collided with it) and endonucleolytically cleaves mRNA at the 5' boundary of the stalled ribosome. Stalled/collided disomes form a new interface (primarily via the 30S subunits) that binds SmrB. Cleaved mRNA becomes available for tmRNA ligation, leading to ribosomal subunit dissociation and rescue of stalled ribosomes. The polypeptide is Ribosome rescue factor SmrB (Yersinia pseudotuberculosis serotype O:1b (strain IP 31758)).